Reading from the N-terminus, the 314-residue chain is Oxaloacetate tautomerase FAHD2B, mitochondrial (314 aa).

A mitochondrion-targeting transit peptide spans 1–84 (MLVSGRRRLL…ATLSVARRAL (84 aa)). 3 residues coordinate Mg(2+): Glu-159, Glu-161, and Asp-190.

It belongs to the FAH family. Requires Mg(2+) as cofactor. It depends on Mn(2+) as a cofactor.

It is found in the mitochondrion. It carries out the reaction oxaloacetate = enol-oxaloacetate. In terms of biological role, tautomerase that converts enol-oxaloacetate, a strong inhibitor of succinate dehydrogenase, to the physiological keto form of oxaloacetate. It is thereby required to maximize aerobic respiration efficiency by preventing succinate dehydrogenase inhibition. The chain is Oxaloacetate tautomerase FAHD2B, mitochondrial from Homo sapiens (Human).